The following is a 561-amino-acid chain: Arginine--tRNA ligase (561 aa).

The short motif at 129–139 (ANPTGPLHVGH) is the 'HIGH' region element.

This sequence belongs to the class-I aminoacyl-tRNA synthetase family. Monomer.

The protein localises to the cytoplasm. It carries out the reaction tRNA(Arg) + L-arginine + ATP = L-arginyl-tRNA(Arg) + AMP + diphosphate. This is Arginine--tRNA ligase from Bordetella avium (strain 197N).